The chain runs to 341 residues: Nicotinate-nucleotide--dimethylbenzimidazole phosphoribosyltransferase (341 aa).

The Proton acceptor role is filled by Glu310.

It belongs to the CobT family.

It carries out the reaction 5,6-dimethylbenzimidazole + nicotinate beta-D-ribonucleotide = alpha-ribazole 5'-phosphate + nicotinate + H(+). It functions in the pathway nucleoside biosynthesis; alpha-ribazole biosynthesis; alpha-ribazole from 5,6-dimethylbenzimidazole: step 1/2. Its function is as follows. Catalyzes the synthesis of alpha-ribazole-5'-phosphate from nicotinate mononucleotide (NAMN) and 5,6-dimethylbenzimidazole (DMB). This Vibrio cholerae serotype O1 (strain ATCC 39315 / El Tor Inaba N16961) protein is Nicotinate-nucleotide--dimethylbenzimidazole phosphoribosyltransferase.